We begin with the raw amino-acid sequence, 233 residues long: Ras-related protein Rab-20 (233 aa).

G17, K18, T19, D32, and T36 together coordinate GTP. T19 is a binding site for Mg(2+). 2 short sequence motifs (switch) span residues 28–41 and 55–72; these read RRFP…GGAF and DTAG…YCRG. Residues T36 and D55 each contribute to the Mg(2+) site. The GTP site is built by G58, N113, K114, and D116. Basic and acidic residues predominate over residues 119–130; that stretch reads SERDTEGGEKEG. A disordered region spans residues 119 to 138; the sequence is SERDTEGGEKEGPASGKVGS. Residues A183 and K184 each contribute to the GTP site. 2 S-geranylgeranyl cysteine lipidation sites follow: C231 and C232.

Belongs to the small GTPase superfamily. Rab family. Requires Mg(2+) as cofactor. In terms of tissue distribution, present in a variety of tissues, but not in brain.

It is found in the cytoplasmic vesicle. Its subcellular location is the phagosome. The protein localises to the phagosome membrane. It localises to the golgi apparatus. It catalyses the reaction GTP + H2O = GDP + phosphate + H(+). Regulated by guanine nucleotide exchange factors (GEFs) which promote the exchange of bound GDP for free GTP. Regulated by GTPase activating proteins (GAPs) which increase the GTP hydrolysis activity. Inhibited by GDP dissociation inhibitors (GDIs). Functionally, plays a role in apical endocytosis/recycling. Plays a role in the maturation and acidification of phagosomes that engulf pathogens, such as S.aureus and Mycobacterium. Plays a role in the fusion of phagosomes with lysosomes. This chain is Ras-related protein Rab-20, found in Mus musculus (Mouse).